The sequence spans 186 residues: Centromere protein M (186 aa).

The protein resides in the nucleus. It is found in the chromosome. Its subcellular location is the centromere. In terms of biological role, probable component of a centromeric complex involved in assembly of kinetochore proteins, mitotic progression and chromosome segregation. The sequence is that of Centromere protein M (cenpm) from Danio rerio (Zebrafish).